The chain runs to 120 residues: Large ribosomal subunit protein bL20 (120 aa).

This sequence belongs to the bacterial ribosomal protein bL20 family.

In terms of biological role, binds directly to 23S ribosomal RNA and is necessary for the in vitro assembly process of the 50S ribosomal subunit. It is not involved in the protein synthesizing functions of that subunit. The sequence is that of Large ribosomal subunit protein bL20 from Karelsulcia muelleri (strain GWSS) (Sulcia muelleri).